We begin with the raw amino-acid sequence, 338 residues long: Acyl-CoA-binding domain-containing protein 1 (338 aa).

Residues 11 to 31 form a helical; Signal-anchor membrane-spanning segment; it reads IIFGLIFAYLLAKLISILLAF. Residues N35 and N41 are each glycosylated (N-linked (GlcNAc...) asparagine). Residues 69 to 89 are disordered; the sequence is AEQGSLRGDEDESDDDDWEGV. Acidic residues predominate over residues 77–89; the sequence is DEDESDDDDWEGV. The 91-residue stretch at 94 to 184 folds into the ACB domain; it reads LDEAFSAATA…VTQLYPAWVE (91 aa). An acyl-CoA-binding positions include 126 to 130, K152, and Y171; that span reads YGLYK. Residue N191 is glycosylated (N-linked (GlcNAc...) asparagine). ANK repeat units follow at residues 217–246, 250–279, 283–312, and 316–338; these read LKIDAIHAFAREGEVENLLKCIENGIPVNA, EGRTPLHWAIDRGHLNVAEALVDKNADVNA, EGQTSLHYAVVCEREALAEFLVKQKADTTI, and DGNSPLDLCESEWSWMREKKDSN.

The protein belongs to the ACBP family. Interacts with RAP2-12. Binds to SMO1-1 and SMO1-2. Post-translationally, glycosylated. In seeds, localized in the outer integument. As to expression, expressed at low levels in roots, stems, leaves, flowers, and siliques, especially within seeds.

It is found in the cell membrane. The protein resides in the secreted. Its subcellular location is the cell wall. The protein localises to the endoplasmic reticulum membrane. Binds medium- and long-chain acyl-CoA esters with very high affinity. Can interact in vitro with arachidonyl-CoA, barely with oleoyl-CoA, but not with palmitoyl-CoA. Confers tolerance and binds to lead ions Pb(2+), probably by promoting lead translocation from roots to shoots. May function as an intracellular carrier of acyl-CoA esters. Modulates negatively sterol synthesis during embryogenesis and gametophytes development via interactions with SMO1-1 and SMO1-2; sterols serve as lipid modulators for gene expression of homeodomain-leucine zipper IV transcription factors. The polypeptide is Acyl-CoA-binding domain-containing protein 1 (Arabidopsis thaliana (Mouse-ear cress)).